The following is a 114-amino-acid chain: UPF0757 protein YmgG (114 aa).

It belongs to the UPF0757 family.

The protein is UPF0757 protein YmgG of Shigella flexneri.